The chain runs to 380 residues: Chaperone protein DnaJ (380 aa).

The region spanning 5-69 (DLYKVLGVEK…QKRAQYDQFG (65 aa)) is the J domain. A CR-type zinc finger spans residues 140-222 (GKKTTITYNR…CGGSGHTEQS (83 aa)). Residues Cys-153, Cys-156, Cys-170, Cys-173, Cys-196, Cys-199, Cys-210, and Cys-213 each contribute to the Zn(2+) site. CXXCXGXG motif repeat units lie at residues 153 to 160 (CETCGGSG), 170 to 177 (CSKCHGAG), 196 to 203 (CDVCHGTG), and 210 to 217 (CATCGGSG).

It belongs to the DnaJ family. Homodimer. The cofactor is Zn(2+).

The protein localises to the cytoplasm. Functionally, participates actively in the response to hyperosmotic and heat shock by preventing the aggregation of stress-denatured proteins and by disaggregating proteins, also in an autonomous, DnaK-independent fashion. Unfolded proteins bind initially to DnaJ; upon interaction with the DnaJ-bound protein, DnaK hydrolyzes its bound ATP, resulting in the formation of a stable complex. GrpE releases ADP from DnaK; ATP binding to DnaK triggers the release of the substrate protein, thus completing the reaction cycle. Several rounds of ATP-dependent interactions between DnaJ, DnaK and GrpE are required for fully efficient folding. Also involved, together with DnaK and GrpE, in the DNA replication of plasmids through activation of initiation proteins. The sequence is that of Chaperone protein DnaJ from Lactiplantibacillus plantarum (strain ATCC BAA-793 / NCIMB 8826 / WCFS1) (Lactobacillus plantarum).